Consider the following 149-residue polypeptide: UPF0756 membrane protein BBR47_12340 (149 aa).

A run of 4 helical transmembrane segments spans residues Ile-6–Ala-26, Pro-48–Gly-68, Ile-86–Pro-106, and Leu-120–Ile-140.

This sequence belongs to the UPF0756 family.

The protein resides in the cell membrane. The sequence is that of UPF0756 membrane protein BBR47_12340 from Brevibacillus brevis (strain 47 / JCM 6285 / NBRC 100599).